The chain runs to 200 residues: ATP-dependent Clp protease proteolytic subunit 2 (200 aa).

Catalysis depends on Ser99, which acts as the Nucleophile. His123 is a catalytic residue.

The protein belongs to the peptidase S14 family. In terms of assembly, fourteen ClpP subunits assemble into 2 heptameric rings which stack back to back to give a disk-like structure with a central cavity, resembling the structure of eukaryotic proteasomes.

It is found in the cytoplasm. It catalyses the reaction Hydrolysis of proteins to small peptides in the presence of ATP and magnesium. alpha-casein is the usual test substrate. In the absence of ATP, only oligopeptides shorter than five residues are hydrolyzed (such as succinyl-Leu-Tyr-|-NHMec, and Leu-Tyr-Leu-|-Tyr-Trp, in which cleavage of the -Tyr-|-Leu- and -Tyr-|-Trp bonds also occurs).. Its function is as follows. Cleaves peptides in various proteins in a process that requires ATP hydrolysis. Has a chymotrypsin-like activity. Plays a major role in the degradation of misfolded proteins. This Symbiobacterium thermophilum (strain DSM 24528 / JCM 14929 / IAM 14863 / T) protein is ATP-dependent Clp protease proteolytic subunit 2.